Here is a 714-residue protein sequence, read N- to C-terminus: DNA gyrase subunit B (714 aa).

A Toprim domain is found at 492 to 606 (SELYVVEGDS…NGHVFLAQPP (115 aa)). Mg(2+) contacts are provided by E498, D571, and D573.

It belongs to the type II topoisomerase GyrB family. In terms of assembly, heterotetramer, composed of two GyrA and two GyrB chains. In the heterotetramer, GyrA contains the active site tyrosine that forms a transient covalent intermediate with DNA, while GyrB binds cofactors and catalyzes ATP hydrolysis. Mg(2+) is required as a cofactor. It depends on Mn(2+) as a cofactor. Ca(2+) serves as cofactor.

It localises to the cytoplasm. It catalyses the reaction ATP-dependent breakage, passage and rejoining of double-stranded DNA.. DNA supercoiling is inhibited by EDTA, novobiocin, coumermycin and ciprofloxacin. In terms of biological role, a type II topoisomerase that negatively supercoils closed circular double-stranded DNA in an ATP-dependent manner and also catalyzes the interconversion of other topological isomers of double-stranded DNA rings, including catenanes and knotted rings. Relaxes negatively supercoiled DNA in an ATP-independent manner. A linear reaction intermediate can be trapped in the presence of the antibiotic ciprofloxacin. Negative supercoiling favors strand separation, and DNA replication, transcription, recombination and repair, all of which involve strand separation. Type II topoisomerases break and join 2 DNA strands simultaneously in an ATP-dependent manner. The polypeptide is DNA gyrase subunit B (Mycobacterium bovis (strain BCG / Pasteur 1173P2)).